The following is a 462-amino-acid chain: Probable Xaa-Pro aminopeptidase pepP (462 aa).

D259, D270, E393, and E433 together coordinate Mn(2+).

It belongs to the peptidase M24B family. Mn(2+) is required as a cofactor.

It carries out the reaction Release of any N-terminal amino acid, including proline, that is linked to proline, even from a dipeptide or tripeptide.. Catalyzes the removal of a penultimate prolyl residue from the N-termini of peptides. This is Probable Xaa-Pro aminopeptidase pepP (pepP) from Metarhizium robertsii (strain ARSEF 23 / ATCC MYA-3075) (Metarhizium anisopliae (strain ARSEF 23)).